The primary structure comprises 462 residues: Trigger factor (462 aa).

One can recognise a PPIase FKBP-type domain in the interval 163–248 (GDEVLFDFKG…LKEVRRVNSL (86 aa)). The tract at residues 442–462 (SMQEKQTQEPAEEKVETKEEK) is disordered. A compositionally biased stretch (basic and acidic residues) spans 452–462 (AEEKVETKEEK).

The protein belongs to the FKBP-type PPIase family. Tig subfamily.

It is found in the cytoplasm. It carries out the reaction [protein]-peptidylproline (omega=180) = [protein]-peptidylproline (omega=0). Involved in protein export. Acts as a chaperone by maintaining the newly synthesized protein in an open conformation. Functions as a peptidyl-prolyl cis-trans isomerase. The protein is Trigger factor of Mycoplasmopsis synoviae (strain 53) (Mycoplasma synoviae).